The sequence spans 284 residues: NAD kinase (284 aa).

Aspartate 70 acts as the Proton acceptor in catalysis. NAD(+) is bound by residues 70-71 (DG), 139-140 (NE), lysine 167, aspartate 169, leucine 177, 180-185 (TAYNLS), and glutamine 236.

It belongs to the NAD kinase family. Requires a divalent metal cation as cofactor.

Its subcellular location is the cytoplasm. The enzyme catalyses NAD(+) + ATP = ADP + NADP(+) + H(+). In terms of biological role, involved in the regulation of the intracellular balance of NAD and NADP, and is a key enzyme in the biosynthesis of NADP. Catalyzes specifically the phosphorylation on 2'-hydroxyl of the adenosine moiety of NAD to yield NADP. This is NAD kinase from Helicobacter pylori (strain J99 / ATCC 700824) (Campylobacter pylori J99).